We begin with the raw amino-acid sequence, 104 residues long: Chitin-binding protein 2 (104 aa).

In terms of assembly, oligomer in an unreduced state. Glycosylated.

Functionally, chitin-binding protein. Has antifungal activity against C.krusei, C.albicans, C.tropicalis and C.parapsilosis. Inhibits C.albicans by increasing cell membrane permeability and production of reactive oxygen species. Has no hemagglutinating activity. In Moringa oleifera (Horseradish tree), this protein is Chitin-binding protein 2.